The chain runs to 346 residues: Annexin A1 (346 aa).

Alanine 2 is modified (N-acetylalanine). Serine 5 is subject to Phosphoserine; by TRPM7. An Isoglutamyl lysine isopeptide (Gln-Lys) (interchain with K-?) cross-link involves residue glutamine 19. Residue tyrosine 21 is modified to Phosphotyrosine; by EGFR. Serine 27 carries the phosphoserine; by PKC modification. Residues serine 34 and serine 37 each carry the phosphoserine modification. The residue at position 41 (threonine 41) is a Phosphothreonine. 4 Annexin repeats span residues 42 to 113 (FNPS…ALLK), 114 to 185 (TPAQ…SLAK), 197 to 269 (DLAD…AIVK), and 273 to 344 (SKPA…ALCG). Lysine 58 carries the N6-acetyllysine modification. Residues glycine 59, valine 60, glutamate 62, lysine 97, leucine 100, glutamate 105, methionine 127, glycine 129, glycine 131, threonine 132, and glutamate 134 each coordinate Ca(2+). Threonine 136 carries the post-translational modification Phosphothreonine. Residues aspartate 171, glycine 210, and arginine 213 each coordinate Ca(2+). Lysine 214 is covalently cross-linked (Glycyl lysine isopeptide (Lys-Gly) (interchain with G-Cter in SUMO1); alternate). A Glycyl lysine isopeptide (Lys-Gly) (interchain with G-Cter in SUMO2); alternate cross-link involves residue lysine 214. Glycine 215 is a binding site for Ca(2+). Lysine 239 bears the N6-acetyllysine mark. The Ca(2+) site is built by aspartate 253, glutamate 255, and leucine 256. Residue lysine 257 forms a Glycyl lysine isopeptide (Lys-Gly) (interchain with G-Cter in SUMO1) linkage. Ca(2+)-binding residues include glutamate 261, methionine 286, glycine 288, and glycine 290. Lysine 312 bears the N6-acetyllysine mark. Cysteines 324 and 343 form a disulfide. Ca(2+)-binding residues include leucine 328, glutamate 330, and threonine 331. Residue lysine 332 forms a Glycyl lysine isopeptide (Lys-Gly) (interchain with G-Cter in SUMO1) linkage. Residue glutamate 336 coordinates Ca(2+).

Belongs to the annexin family. In terms of assembly, homodimer; non-covalently linked. Homodimer; linked by transglutamylation. Homodimers linked by transglutamylation are observed in placenta, but not in other tissues. Interacts with S100A11. Heterotetramer, formed by two molecules each of S100A11 and ANXA1. Interacts with DYSF. Interacts with EGFR. Phosphorylated by protein kinase C, EGFR and TRPM7. Phosphorylated in response to EGF treatment. Post-translationally, sumoylated. In terms of processing, proteolytically cleaved by cathepsin CTSG to release the active N-terminal peptide Ac2-26. Detected in resting neutrophils. Detected in peripheral blood T-cells. Detected in extracellular vesicles in blood serum from patients with inflammatory bowel disease, but not in serum from healthy donors. Detected in placenta (at protein level). Detected in liver.

The protein resides in the nucleus. It localises to the cytoplasm. Its subcellular location is the cell projection. It is found in the cilium. The protein localises to the cell membrane. The protein resides in the membrane. It localises to the endosome membrane. Its subcellular location is the basolateral cell membrane. It is found in the apical cell membrane. The protein localises to the lateral cell membrane. The protein resides in the secreted. It localises to the extracellular space. Its subcellular location is the extracellular exosome. It is found in the cytoplasmic vesicle. The protein localises to the secretory vesicle lumen. The protein resides in the phagocytic cup. It localises to the early endosome. Its subcellular location is the cytoplasmic vesicle membrane. Plays important roles in the innate immune response as effector of glucocorticoid-mediated responses and regulator of the inflammatory process. Has anti-inflammatory activity. Plays a role in glucocorticoid-mediated down-regulation of the early phase of the inflammatory response. Contributes to the adaptive immune response by enhancing signaling cascades that are triggered by T-cell activation, regulates differentiation and proliferation of activated T-cells. Promotes the differentiation of T-cells into Th1 cells and negatively regulates differentiation into Th2 cells. Has no effect on unstimulated T cells. Negatively regulates hormone exocytosis via activation of the formyl peptide receptors and reorganization of the actin cytoskeleton. Has high affinity for Ca(2+) and can bind up to eight Ca(2+) ions. Displays Ca(2+)-dependent binding to phospholipid membranes. Plays a role in the formation of phagocytic cups and phagosomes. Plays a role in phagocytosis by mediating the Ca(2+)-dependent interaction between phagosomes and the actin cytoskeleton. Functionally, functions at least in part by activating the formyl peptide receptors and downstream signaling cascades. Promotes chemotaxis of granulocytes and monocytes via activation of the formyl peptide receptors. Promotes rearrangement of the actin cytoskeleton, cell polarization and cell migration. Promotes resolution of inflammation and wound healing. Acts via neutrophil N-formyl peptide receptors to enhance the release of CXCL2. The chain is Annexin A1 (ANXA1) from Homo sapiens (Human).